The chain runs to 688 residues: Thyroid hormone-induced protein B (688 aa).

An N-terminal signal peptide occupies residues 1 to 20 (MMLSHWVLLLSLGAVWLAEG). 4 consecutive MAM domains span residues 26–169 (GSCT…GYCI), 170–330 (ECDF…SCSG), 341–500 (AGCD…SCKI), and 509–669 (GKCT…PCND). N32 and N135 each carry an N-linked (GlcNAc...) asparagine glycan. N-linked (GlcNAc...) asparagine glycans are attached at residues N358 and N668.

The protein localises to the membrane. The protein resides in the secreted. It is found in the extracellular space. This is Thyroid hormone-induced protein B from Xenopus laevis (African clawed frog).